The following is a 351-amino-acid chain: MAAPPCPPRRPISAPCFLLCFLLGFVAGLFPFAHRHLHLDLHLPLPPPATAILVREDPPSVVVDVDTPLPAAAEERKLLLVVTPTRARPLQAYYLRRLAHTLRLAPSPLLWLVVESGAATRDTAALLRGCGVMYRHLSSPVPDAPQDRPRRRGRRQDRPAVDSRARQRNTALDHIEHHRLHGIVYFADEDNVYSLDLFYHLRDIRSFGTWPVATLAPGKSKTILQGPVCEGSRVVGWHTTDRSKNQRRFHVDMSGFAFNSSKLWDAKNRGHQAWNYIRQLDTAKEGFQETAFIEQLVEDETHMEGVPPGCSKIMNFHLHLEDKNAIYLNGWQTTQNLDVIIPLKKEARPLL.

The Cytoplasmic segment spans residues 1 to 11 (MAAPPCPPRRP). Residues 12-32 (ISAPCFLLCFLLGFVAGLFPF) traverse the membrane as a helical; Signal-anchor for type II membrane protein segment. Residues 33-351 (AHRHLHLDLH…PLKKEARPLL (319 aa)) lie on the Lumenal side of the membrane. Positions 138-169 (SSPVPDAPQDRPRRRGRRQDRPAVDSRARQRN) are disordered. The segment covering 156-169 (QDRPAVDSRARQRN) has biased composition (basic and acidic residues). N-linked (GlcNAc...) asparagine glycosylation occurs at Asn259.

The protein belongs to the glycosyltransferase 43 family.

It localises to the golgi apparatus membrane. Its function is as follows. Involved in the synthesis of glucuronoxylan hemicellulose in secondary cell walls. This chain is Probable glucuronosyltransferase Os10g0205300, found in Oryza sativa subsp. japonica (Rice).